Consider the following 173-residue polypeptide: MDVSKISPGKDLPNDINVVIEIPQGSQVKYEVDKDSGALVVDRFLFTPMAYPAAYGFIPGTLAADGDPADALVLTPAAVVPGSVIRARPIGMLKMEDESGQDEKIICVPHDKVHPQFSNVHSVDDLPEITKKAITHFFERYKDLEPNKWVKVTGWADKAEAGKVIMEALAAAK.

Substrate contacts are provided by Lys-29, Arg-43, and Tyr-55. Mg(2+)-binding residues include Asp-65, Asp-70, and Asp-102. Residue Tyr-141 participates in substrate binding.

It belongs to the PPase family. Homohexamer. Mg(2+) serves as cofactor.

The protein resides in the cytoplasm. It carries out the reaction diphosphate + H2O = 2 phosphate + H(+). Catalyzes the hydrolysis of inorganic pyrophosphate (PPi) forming two phosphate ions. This Gluconobacter oxydans (strain 621H) (Gluconobacter suboxydans) protein is Inorganic pyrophosphatase.